A 1513-amino-acid chain; its full sequence is DNA-directed RNA polymerase subunit beta'' (1513 aa).

Zn(2+) is bound by residues Cys-220, Cys-296, Cys-303, and Cys-306. Positions 644-769 (RTREKDSENE…EYGNPEEDSV (126 aa)) are disordered. Positions 659–679 (NEYRTREEECKTLEDEYRTRE) are enriched in basic and acidic residues. Residues 680-707 (EEYETLEDEYGIPENEYETLEDEYGILE) are compositionally biased toward acidic residues. Residues 726–737 (NKYRPREDKYGT) show a composition bias toward basic and acidic residues. The span at 738 to 767 (LEEDSEDEHGTLEEDSEEDSEDEYGNPEED) shows a compositional bias: acidic residues.

The protein belongs to the RNA polymerase beta' chain family. RpoC2 subfamily. As to quaternary structure, in plastids the minimal PEP RNA polymerase catalytic core is composed of four subunits: alpha, beta, beta', and beta''. When a (nuclear-encoded) sigma factor is associated with the core the holoenzyme is formed, which can initiate transcription. Requires Zn(2+) as cofactor.

The protein resides in the plastid. It is found in the chloroplast. It catalyses the reaction RNA(n) + a ribonucleoside 5'-triphosphate = RNA(n+1) + diphosphate. Functionally, DNA-dependent RNA polymerase catalyzes the transcription of DNA into RNA using the four ribonucleoside triphosphates as substrates. The polypeptide is DNA-directed RNA polymerase subunit beta'' (Oryza sativa (Rice)).